The primary structure comprises 192 residues: Segregation and condensation protein B (192 aa).

Belongs to the ScpB family. In terms of assembly, homodimer. Homodimerization may be required to stabilize the binding of ScpA to the Smc head domains. Component of a cohesin-like complex composed of ScpA, ScpB and the Smc homodimer, in which ScpA and ScpB bind to the head domain of Smc. The presence of the three proteins is required for the association of the complex with DNA.

It localises to the cytoplasm. Participates in chromosomal partition during cell division. May act via the formation of a condensin-like complex containing Smc and ScpA that pull DNA away from mid-cell into both cell halves. The polypeptide is Segregation and condensation protein B (Mycoplasma mobile (strain ATCC 43663 / 163K / NCTC 11711) (Mesomycoplasma mobile)).